The sequence spans 243 residues: Cysteine-rich secretory protein 2 (243 aa).

Positions M1 to G21 are cleaved as a signal peptide. The SCP domain occupies V41–Y169. Disulfide bonds link C189/C196, C192/C201, C205/C238, C214/C232, and C223/C236. Residues C205–C238 form the ShKT domain.

Belongs to the CRISP family. Interacts with NSUN4 isoform 3. Testis and epididymis.

The protein localises to the secreted. May regulate some ion channels' activity and thereby regulate calcium fluxes during sperm capacitation. The polypeptide is Cysteine-rich secretory protein 2 (CRISP2) (Homo sapiens (Human)).